A 355-amino-acid chain; its full sequence is Guanine nucleotide-binding protein subunit alpha-14 (355 aa).

The G-alpha domain occupies 34-355; that stretch reads RELKLLLLGT…QLNLREFNLV (322 aa). Residues 37 to 50 are G1 motif; that stretch reads KLLLLGTGESGKST. GTP-binding positions include 42-49, 176-182, 201-205, 270-273, and alanine 327; these read GTGESGKS, LRVRVPT, DVGGQ, and NKKD. Serine 49 contacts Mg(2+). The segment at 174-182 is G2 motif; that stretch reads DVLRVRVPT. An ADP-ribosylarginine; by cholera toxin modification is found at arginine 179. Threonine 182 lines the Mg(2+) pocket. The tract at residues 197–206 is G3 motif; it reads FRMVDVGGQR. Residues 266-273 are G4 motif; the sequence is ILFLNKKD. The tract at residues 325-330 is G5 motif; the sequence is TCATDT.

The protein belongs to the G-alpha family. G(q) subfamily. G proteins are composed of 3 units; alpha, beta and gamma. The alpha chain contains the guanine nucleotide binding site.

Functionally, guanine nucleotide-binding proteins (G proteins) are involved as modulators or transducers in various transmembrane signaling systems. This chain is Guanine nucleotide-binding protein subunit alpha-14 (GNA14), found in Homo sapiens (Human).